Consider the following 589-residue polypeptide: ATP-dependent lipid A-core flippase (589 aa).

A run of 5 helical transmembrane segments spans residues 29-49, 68-88, 157-177, 254-274, and 283-303; these read WLLV…STFL, ALWL…AGYI, VIGA…AILL, LSSA…LLIA, and LSPG…PALK. Residues 32-314 form the ABC transmembrane type-1 domain; sequence VVAACGALLE…LTNVQNMLQS (283 aa). Residues 346–582 form the ABC transporter domain; that stretch reads IEFRGITARY…DGLYAYLYSM (237 aa). 380-387 contacts ATP; it reads GRSGSGKS.

It belongs to the ABC transporter superfamily. Lipid exporter (TC 3.A.1.106) family. As to quaternary structure, homodimer.

The protein resides in the cell inner membrane. It catalyses the reaction ATP + H2O + lipid A-core oligosaccharideSide 1 = ADP + phosphate + lipid A-core oligosaccharideSide 2.. In terms of biological role, involved in lipopolysaccharide (LPS) biosynthesis. Translocates lipid A-core from the inner to the outer leaflet of the inner membrane. Transmembrane domains (TMD) form a pore in the inner membrane and the ATP-binding domain (NBD) is responsible for energy generation. This is ATP-dependent lipid A-core flippase from Xylella fastidiosa (strain 9a5c).